Here is a 177-residue protein sequence, read N- to C-terminus: Large ribosomal subunit protein uL6 (177 aa).

This sequence belongs to the universal ribosomal protein uL6 family. Part of the 50S ribosomal subunit.

This protein binds to the 23S rRNA, and is important in its secondary structure. It is located near the subunit interface in the base of the L7/L12 stalk, and near the tRNA binding site of the peptidyltransferase center. The chain is Large ribosomal subunit protein uL6 from Methanococcoides burtonii (strain DSM 6242 / NBRC 107633 / OCM 468 / ACE-M).